The chain runs to 225 residues: Uracil-DNA glycosylase (225 aa).

Asp65 acts as the Proton acceptor in catalysis.

Belongs to the uracil-DNA glycosylase (UDG) superfamily. UNG family.

The protein localises to the cytoplasm. It catalyses the reaction Hydrolyzes single-stranded DNA or mismatched double-stranded DNA and polynucleotides, releasing free uracil.. Functionally, excises uracil residues from the DNA which can arise as a result of misincorporation of dUMP residues by DNA polymerase or due to deamination of cytosine. The chain is Uracil-DNA glycosylase from Clostridium perfringens (strain ATCC 13124 / DSM 756 / JCM 1290 / NCIMB 6125 / NCTC 8237 / Type A).